Here is a 527-residue protein sequence, read N- to C-terminus: MFMLLVFGALLPEVPLSGQDKAPPQADGISATPLFNYASLRLPEEHIPFFLHNNRHIATVCRKDSHCPYKKYLENLKYCWGYEKSCRPEFRFGYPVCTYVDMGWTDTLESAQEIFWKQADFGYAAERLEELHVLCQPKEKNDSSLVCSRYLQYCRATNIYLDLRNIKRNHDRFKEDFVQSGEIGGYCKLDIRSLMSQGQRKSPLQSWFAELQSYTELNFRPVEDAQCDIVIEKPTYFMKLDAGVNMYHHFCDFINLYITQHVNNSFSTDVYVVMWDTSSYGYGDLFSDTWKAFTDYDVIHLKTYDAKRVCFKEAIFSLLPRMRYGLFYNTPLISGCQNTGLFRAFSQHVLHRLNITQEGPKGGKIRVTILARSTEYRKILNQNELVNALKTVSTFEVQIVDYKYKELGFLDQLRITHNTDIFIGMHGAGLTHLLFLPDWAAVFELYNCGDERCYLDLARLRGVHYITWRRQNKVFPQDKGHHPTLGEHPKFTNYSFDVEEFMYLVLQAADYVLQHPKWPFKKKHDEL.

An N-terminal signal peptide occupies residues 1-17 (MFMLLVFGALLPEVPLS). The Required for optimal activity motif lies at 295-297 (DYD). Residue N354 is glycosylated (N-linked (GlcNAc...) asparagine). A Prevents secretion from ER motif is present at residues 524 to 527 (HDEL).

The protein belongs to the glycosyltransferase 61 family.

The protein resides in the endoplasmic reticulum lumen. It carries out the reaction L-seryl-[protein] + UDP-N-acetyl-alpha-D-glucosamine = 3-O-(N-acetyl-beta-D-glucosaminyl)-L-seryl-[protein] + UDP + H(+). The enzyme catalyses L-threonyl-[protein] + UDP-N-acetyl-alpha-D-glucosamine = 3-O-(N-acetyl-beta-D-glucosaminyl)-L-threonyl-[protein] + UDP + H(+). Functionally, catalyzes the transfer of a single N-acetylglucosamine from UDP-GlcNAc to a serine or threonine residue in extracellular proteins resulting in their modification with a beta-linked N-acetylglucosamine (O-GlcNAc). Specifically glycosylates the Thr residue located between the fifth and sixth conserved cysteines of folded EGF-like domains. This chain is EGF domain-specific O-linked N-acetylglucosamine transferase (EOGT), found in Bos taurus (Bovine).